A 739-amino-acid chain; its full sequence is Probable endo-1,3(4)-beta-glucanase An02g00850 (739 aa).

The signal sequence occupies residues 1–24 (MPTSTLLWSVGSLALSSMVLPAAA). Positions 31 to 283 (ETWKGEDFLT…WAGGVYSTSG (253 aa)) constitute a GH16 domain. Asn-59 and Asn-74 each carry an N-linked (GlcNAc...) asparagine glycan. Glu-140 acts as the Nucleophile in catalysis. Glu-145 acts as the Proton donor in catalysis. Asn-396 carries an N-linked (GlcNAc...) asparagine glycan. Low complexity-rich tracts occupy residues 431–442 (SEATEASNSEGS), 452–499 (TGAS…AGAT), and 507–522 (GASG…SAAA). Residues 431–718 (SEATEASNSE…TPSTPVFTGG (288 aa)) are disordered. 2 N-linked (GlcNAc...) asparagine glycosylation sites follow: Asn-459 and Asn-482. The span at 523–532 (TPSNVSSTGA) shows a compositional bias: polar residues. Asn-526 and Asn-537 each carry an N-linked (GlcNAc...) asparagine glycan. Over residues 539–548 (SEDSSASSEA) the composition is skewed to polar residues. Low complexity predominate over residues 561 to 587 (GASAEANGNDSASSNAATASNVSGASA). N-linked (GlcNAc...) asparagine glycosylation is found at Asn-569, Asn-581, Asn-592, and Asn-620. Residues 597 to 641 (ASAGANAGSSAAPSSVSGASAEANGSEGSSSHSSGSQAGAHSYGS) are compositionally biased toward low complexity. The span at 654–673 (PSSSSHAFATAPSSTGSSRV) shows a compositional bias: polar residues. The span at 674-713 (PTSAAAANNAAAATQGSSASGSNSGSSGHGSSSATTPSTP) shows a compositional bias: low complexity. The GPI-anchor amidated glycine moiety is linked to residue Gly-717. Residues 718–739 (GANKLTLGASSVLSVLAFALLA) constitute a propeptide, removed in mature form.

Belongs to the glycosyl hydrolase 16 family.

The protein resides in the cell membrane. It catalyses the reaction Endohydrolysis of (1-&gt;3)- or (1-&gt;4)-linkages in beta-D-glucans when the glucose residue whose reducing group is involved in the linkage to be hydrolyzed is itself substituted at C-3.. Functionally, mixed-linked glucanase involved in the degradation of complex natural cellulosic substrates. The protein is Probable endo-1,3(4)-beta-glucanase An02g00850 of Aspergillus niger (strain ATCC MYA-4892 / CBS 513.88 / FGSC A1513).